A 209-amino-acid chain; its full sequence is NADH-quinone oxidoreductase subunit C (209 aa).

The protein belongs to the complex I 30 kDa subunit family. NDH-1 is composed of 14 different subunits. Subunits NuoB, C, D, E, F, and G constitute the peripheral sector of the complex.

Its subcellular location is the cell inner membrane. The enzyme catalyses a quinone + NADH + 5 H(+)(in) = a quinol + NAD(+) + 4 H(+)(out). Functionally, NDH-1 shuttles electrons from NADH, via FMN and iron-sulfur (Fe-S) centers, to quinones in the respiratory chain. The immediate electron acceptor for the enzyme in this species is believed to be ubiquinone. Couples the redox reaction to proton translocation (for every two electrons transferred, four hydrogen ions are translocated across the cytoplasmic membrane), and thus conserves the redox energy in a proton gradient. The polypeptide is NADH-quinone oxidoreductase subunit C (Xanthobacter autotrophicus (strain ATCC BAA-1158 / Py2)).